Here is a 328-residue protein sequence, read N- to C-terminus: Beta-ketoacyl-[acyl-carrier-protein] synthase III (328 aa).

Residues cysteine 122 and histidine 255 contribute to the active site. The segment at 256 to 260 (QANVR) is ACP-binding. Asparagine 285 is a catalytic residue.

The protein belongs to the thiolase-like superfamily. FabH family. In terms of assembly, homodimer.

The protein localises to the cytoplasm. It catalyses the reaction malonyl-[ACP] + acetyl-CoA + H(+) = 3-oxobutanoyl-[ACP] + CO2 + CoA. Its pathway is lipid metabolism; fatty acid biosynthesis. Its function is as follows. Catalyzes the condensation reaction of fatty acid synthesis by the addition to an acyl acceptor of two carbons from malonyl-ACP. Catalyzes the first condensation reaction which initiates fatty acid synthesis and may therefore play a role in governing the total rate of fatty acid production. Possesses both acetoacetyl-ACP synthase and acetyl transacylase activities. Its substrate specificity determines the biosynthesis of branched-chain and/or straight-chain of fatty acids. This chain is Beta-ketoacyl-[acyl-carrier-protein] synthase III, found in Bordetella petrii (strain ATCC BAA-461 / DSM 12804 / CCUG 43448).